The sequence spans 94 residues: UPF0298 protein SZO_03600 (94 aa).

Belongs to the UPF0298 family.

It localises to the cytoplasm. This Streptococcus equi subsp. zooepidemicus (strain H70) protein is UPF0298 protein SZO_03600.